A 419-amino-acid chain; its full sequence is Vascular endothelial growth factor C (419 aa).

The first 31 residues, 1–31, serve as a signal peptide directing secretion; it reads MHLLGFFSVACSLLAAALLPGPREAPAAAAA. A propeptide spans 32–111 (or 102); it reads FESGLDLSDA…RTEETIKFAA (80 aa). 3 disulfides stabilise this stretch: cysteine 131-cysteine 173, cysteine 162-cysteine 209, and cysteine 166-cysteine 211. Asparagine 175, asparagine 205, and asparagine 240 each carry an N-linked (GlcNAc...) asparagine glycan. A propeptide spanning residues 228–419 is cleaved from the precursor; that stretch reads SLPATLPQCQ…PSYWKRPQMS (192 aa). 4 consecutive repeat copies span residues 280–295, 304–319, 328–343, and 347–362. A 4 X 16 AA repeats of C-X(10)-C-X-C-X(1,3)-C region spans residues 280-362; it reads CGPNKELDEE…LNPGKCACEC (83 aa).

It belongs to the PDGF/VEGF growth factor family. Homodimer; non-covalent and antiparallel. Interacts with FLT4/VEGFR3; the interaction is required for FLT4/VEGFR3 homodimarization and activation. Post-translationally, undergoes a complex proteolytic maturation which generates a variety of processed secreted forms with increased activity toward VEGFR-3, but only the fully processed form could activate VEGFR-2. VEGF-C first form an antiparallel homodimer linked by disulfide bonds. Before secretion, a cleavage occurs between Arg-227 and Ser-228 producing a heterotetramer. The next extracellular step of the processing removes the N-terminal propeptide. Finally the mature VEGF-C is composed mostly of two VEGF homology domains (VHDs) bound by non-covalent interactions. Expressed in the spleen. Expressed in the lymph node, thymus, appendix and bone marrow. Expressed in the heart, placenta, skeletal muscle, ovary and small intestine. Expressed in the prostate, testis and colon.

It localises to the secreted. Growth factor active in angiogenesis, and endothelial cell growth, stimulating their proliferation and migration and also has effects on the permeability of blood vessels. May function in angiogenesis of the venous and lymphatic vascular systems during embryogenesis, and also in the maintenance of differentiated lymphatic endothelium in adults. Binds and activates KDR/VEGFR2 and FLT4/VEGFR3 receptors. The chain is Vascular endothelial growth factor C (VEGFC) from Homo sapiens (Human).